The chain runs to 146 residues: Large ribosomal subunit protein bL21 (146 aa).

The disordered stretch occupies residues 96 to 146 (KKKTRRKMGHRQELTRVMVKSISITNSTPKTSSKTEVKKKSTSPKASNPEN).

It belongs to the bacterial ribosomal protein bL21 family. Part of the 50S ribosomal subunit. Contacts protein L20.

Functionally, this protein binds to 23S rRNA in the presence of protein L20. The protein is Large ribosomal subunit protein bL21 of Prochlorococcus marinus subsp. pastoris (strain CCMP1986 / NIES-2087 / MED4).